Here is a 405-residue protein sequence, read N- to C-terminus: Threonine synthase (405 aa).

Residue K104 is modified to N6-(pyridoxal phosphate)lysine. Pyridoxal 5'-phosphate is bound by residues N130, 231-235 (GNAGN), and T369.

This sequence belongs to the threonine synthase family. As to quaternary structure, homotrimer. The cofactor is pyridoxal 5'-phosphate.

It catalyses the reaction O-phospho-L-homoserine + H2O = L-threonine + phosphate. It functions in the pathway amino-acid biosynthesis; L-threonine biosynthesis; L-threonine from L-aspartate: step 5/5. Functionally, catalyzes the gamma-elimination of phosphate from L-phosphohomoserine and the beta-addition of water to produce L-threonine. Does not catalyze the conversion of O-acetyl-L-homoserine into threonine. In Methanosarcina acetivorans (strain ATCC 35395 / DSM 2834 / JCM 12185 / C2A), this protein is Threonine synthase (thrC).